A 364-amino-acid polypeptide reads, in one-letter code: Serine/threonine-protein kinase ENV7 (364 aa).

Residues Cys-13, Cys-14, and Cys-15 are each lipidated (S-palmitoyl cysteine). The 335-residue stretch at 30-364 folds into the Protein kinase domain; it reads YRIQRLLGEG…LLNLLQDLDT (335 aa). ATP-binding positions include 36–44 and Lys-69; that span reads LGEGGMSFV. The Proton acceptor role is filled by Asp-215.

Belongs to the protein kinase superfamily. Ser/Thr protein kinase family.

Its subcellular location is the vacuole membrane. The catalysed reaction is L-seryl-[protein] + ATP = O-phospho-L-seryl-[protein] + ADP + H(+). The enzyme catalyses L-threonyl-[protein] + ATP = O-phospho-L-threonyl-[protein] + ADP + H(+). Its function is as follows. Serine/threonine-protein kinase involved in vacuolar processing and morphology. The protein is Serine/threonine-protein kinase ENV7 (ENV7) of Saccharomyces cerevisiae (strain ATCC 204508 / S288c) (Baker's yeast).